The primary structure comprises 501 residues: Phosphatase and actin regulator 1 (501 aa).

An RPEL 1 repeat occupies 1-18 (MRQSREELIKRGVLKEIF). 2 disordered regions span residues 21–46 (DGEL…QVLS) and 295–329 (DNKE…EDNS). Positions 36–46 (GQPLGSGQVLS) are enriched in low complexity. A compositionally biased stretch (basic and acidic residues) spans 295 to 304 (DNKENVPHEA). A compositionally biased stretch (acidic residues) spans 317–328 (EEEEEEDEDEDN). RPEL repeat units follow at residues 343-368 (DSLA…PMQT), 381-406 (TKLT…KPRN), and 419-444 (RRLT…IRFS). The interval 382–415 (KLTRRLSQRPTAEELEQRNILKPRNEQEEQEEKR) is disordered. Residues 392-415 (TAEELEQRNILKPRNEQEEQEEKR) are compositionally biased toward basic and acidic residues.

It belongs to the phosphatase and actin regulator family. Interacts (via RPEL repeats) with ACTA1. Expressed in the gizzard, and in neurons from central and peripheral nervous systems.

Its subcellular location is the cytoplasm. The protein resides in the synapse. It is found in the nucleus. Its function is as follows. Binds actin monomers (G actin) and plays a role in the reorganization of the actin cytoskeleton and in formation of actin stress fibers. The chain is Phosphatase and actin regulator 1 (PHACTR1) from Gallus gallus (Chicken).